The primary structure comprises 523 residues: Calcium uptake protein 3, mitochondrial (523 aa).

The N-terminal 6 residues, 1–6, are a transit peptide targeting the mitochondrion; the sequence is MAALRR. The disordered stretch occupies residues 18-48; it reads LAPQQPFLSPWGRPAGTAPGMSGRPFSGREE. Residues 225–260 form the EF-hand 1 domain; that stretch reads KPHAGFRIAFNMFDTDGNEMVDKKEFLVLQEIFRKK. Asp-238, Asp-240, Asn-242, Met-244, Asp-246, and Glu-249 together coordinate Ca(2+). Positions 414–429 constitute an EF-hand 2; degenerate domain; the sequence is ITFDEFRSFFQFLNNL. The EF-hand 3 domain occupies 463–498; that stretch reads LSPHLVNTVFKIFDVDKDDQLSYKEFIGIMKDRLHR. Ca(2+) is bound by residues Asp-476, Asp-478, Asp-480, Gln-482, and Glu-487.

The protein belongs to the MICU1 family. MICU3 subfamily. As to quaternary structure, heterodimer; disulfide-linked; heterodimerizes with MICU1. Component of the uniplex complex, composed of MCU, EMRE/SMDT1, MICU1 and MICU3 in a 4:4:1:1 stoichiometry.

Its subcellular location is the mitochondrion intermembrane space. It localises to the mitochondrion inner membrane. Its function is as follows. Tissue-specific calcium sensor of the mitochondrial calcium uniporter (MCU) channel, which specifically regulates MCU channel activity in the central nervous system and skeletal muscle. Senses calcium level via its EF-hand domains: compared to MICU1 and MICU2, MICU3 has a higher affinity for calcium. MICU1 and MICU3 form a disulfide-linked heterodimer that stimulates and inhibits MCU activity, depending on the concentration of calcium. At low calcium levels, MICU1 occludes the pore of the MCU channel, preventing mitochondrial calcium uptake. At higher calcium levels, calcium-binding to MICU1 and MICU3 induces a conformational change that weakens MCU-MICU1 interactions and moves the MICU1-MICU3 heterodimer away from the pore, allowing calcium permeation through the MCU channel. The high calcium affinity of MICU3 lowers the calcium threshold necessary for calcium permeation through the MCU channel. The MICU1-MICU3 heterodimer promotes flexibility of neurotransmission in neuronal cells by enhancing mitochondrial calcium uptake in presynapses. It is also required to increase mitochondrial calcium uptake in skeletal muscle cells, thereby increasing ATP production. In Rattus norvegicus (Rat), this protein is Calcium uptake protein 3, mitochondrial.